Here is a 93-residue protein sequence, read N- to C-terminus: MSSQQETNDKSNTQGHPETDPEGKTGTDTGNTEDSPPDTDNVPITDDAIMDDVMDEDVKEEDIDYSWIEDMRDEDVDAEWLFELIDECNGWPD.

Polar residues predominate over residues 1-16; the sequence is MSSQQETNDKSNTQGH. The segment at 1 to 52 is disordered; it reads MSSQQETNDKSNTQGHPETDPEGKTGTDTGNTEDSPPDTDNVPITDDAIMDD.

It is found in the virion. This Rice yellow stunt virus (RYSV) protein is Protein 6 (6).